The following is a 208-amino-acid chain: Virion protein US10 homolog (208 aa).

The interval 17-61 (ARGAKLSPGQHPRPSHAVRGRTAPGTRSSRRRTCEDGTSGPRDPR) is disordered. Residues 167-179 (CAFWCCLAHAATC) fold into a zinc finger.

This sequence belongs to the herpesviridae US10 family. Post-translationally, phosphorylated.

It localises to the virion tegument. The protein localises to the host nucleus matrix. The polypeptide is Virion protein US10 homolog (Homo sapiens (Human)).